Reading from the N-terminus, the 135-residue chain is uncharacterized protein (135 aa).

The 116-residue stretch at 8-123 folds into the HotDog ACOT-type domain; that stretch reads PKGIIVLKTL…IFIYVAINKT (116 aa).

The protein belongs to the acyl coenzyme A hydrolase family.

This is an uncharacterized protein from Buchnera aphidicola subsp. Acyrthosiphon pisum (strain APS) (Acyrthosiphon pisum symbiotic bacterium).